The following is a 191-amino-acid chain: Small ribosomal subunit protein eS7 (191 aa).

Belongs to the eukaryotic ribosomal protein eS7 family.

The chain is Small ribosomal subunit protein eS7 (RPS7) from Hordeum vulgare (Barley).